Consider the following 188-residue polypeptide: Large ribosomal subunit protein uL22 (188 aa).

A disordered region spans residues 155–188 (STPEGAKKGKKKKGTKDAVEKSSKRVKTAATAAH).

Belongs to the universal ribosomal protein uL22 family.

The protein is Large ribosomal subunit protein uL22 (RpL17) of Agriotes lineatus (Lined click beetle).